The following is a 241-amino-acid chain: Regulatory protein VirG (241 aa).

Positions 3–117 constitute a Response regulatory domain; it reads HVLVIDDDVA…EFLARIRVAL (115 aa). Asp-52 is modified (4-aspartylphosphate). The ompR/PhoB-type DNA-binding region spans 129 to 229; sequence RRSFYFADWT…ARGAGYFFDA (101 aa).

Post-translationally, phosphorylated by wide host range (WHR) VirA protein.

The protein localises to the cytoplasm. VirG is required for the positive regulation of at least two vir loci encoded by the Ri plasmid of A.rhizogenes. This Rhizobium rhizogenes (Agrobacterium rhizogenes) protein is Regulatory protein VirG (virG).